A 209-amino-acid chain; its full sequence is Large ribosomal subunit protein uL4 (209 aa).

The disordered stretch occupies residues 45-78; the sequence is RQGTHKAKERAEVAGSTRKIKKQKGTGTARAGSA.

It belongs to the universal ribosomal protein uL4 family. In terms of assembly, part of the 50S ribosomal subunit.

Functionally, one of the primary rRNA binding proteins, this protein initially binds near the 5'-end of the 23S rRNA. It is important during the early stages of 50S assembly. It makes multiple contacts with different domains of the 23S rRNA in the assembled 50S subunit and ribosome. Its function is as follows. Forms part of the polypeptide exit tunnel. The polypeptide is Large ribosomal subunit protein uL4 (Flavobacterium psychrophilum (strain ATCC 49511 / DSM 21280 / CIP 103535 / JIP02/86)).